Here is a 201-residue protein sequence, read N- to C-terminus: Putative 3-methyladenine DNA glycosylase (201 aa).

The protein belongs to the DNA glycosylase MPG family.

The protein is Putative 3-methyladenine DNA glycosylase of Rhodopseudomonas palustris (strain HaA2).